A 62-amino-acid polypeptide reads, in one-letter code: Large ribosomal subunit protein bL28 (62 aa).

The disordered stretch occupies residues 1–28 (MARVCAITGRKARSGNSRSHAMNATKRK).

The protein belongs to the bacterial ribosomal protein bL28 family.

This chain is Large ribosomal subunit protein bL28, found in Bacillus cytotoxicus (strain DSM 22905 / CIP 110041 / 391-98 / NVH 391-98).